Reading from the N-terminus, the 185-residue chain is Nucleoside triphosphate pyrophosphatase (185 aa).

Asp70 serves as the catalytic Proton acceptor.

Belongs to the Maf family. A divalent metal cation serves as cofactor.

The protein localises to the cytoplasm. The enzyme catalyses a ribonucleoside 5'-triphosphate + H2O = a ribonucleoside 5'-phosphate + diphosphate + H(+). The catalysed reaction is a 2'-deoxyribonucleoside 5'-triphosphate + H2O = a 2'-deoxyribonucleoside 5'-phosphate + diphosphate + H(+). Its function is as follows. Nucleoside triphosphate pyrophosphatase. May have a dual role in cell division arrest and in preventing the incorporation of modified nucleotides into cellular nucleic acids. The sequence is that of Nucleoside triphosphate pyrophosphatase from Nitratiruptor sp. (strain SB155-2).